The chain runs to 184 residues: Large ribosomal subunit protein uL6 (184 aa).

Belongs to the universal ribosomal protein uL6 family. In terms of assembly, part of the 50S ribosomal subunit.

Functionally, this protein binds to the 23S rRNA, and is important in its secondary structure. It is located near the subunit interface in the base of the L7/L12 stalk, and near the tRNA binding site of the peptidyltransferase center. The sequence is that of Large ribosomal subunit protein uL6 from Fervidobacterium nodosum (strain ATCC 35602 / DSM 5306 / Rt17-B1).